Consider the following 689-residue polypeptide: Glycine--tRNA ligase beta subunit (689 aa).

The protein belongs to the class-II aminoacyl-tRNA synthetase family. In terms of assembly, tetramer of two alpha and two beta subunits.

Its subcellular location is the cytoplasm. The catalysed reaction is tRNA(Gly) + glycine + ATP = glycyl-tRNA(Gly) + AMP + diphosphate. This Acinetobacter baumannii (strain ATCC 17978 / DSM 105126 / CIP 53.77 / LMG 1025 / NCDC KC755 / 5377) protein is Glycine--tRNA ligase beta subunit.